A 225-amino-acid polypeptide reads, in one-letter code: MESVVVKISGSLVHPPRLDYLTRLRDVLWGLVDGGFRVAVVVGGGGLARSYIDVLRRAGVSEALLDEMGIESSRLNASLLAKLLYPRSQPYPLASLREVLEVFMTGLIPVSGGFQPGQSTNAVAAVIAEALGARTLLNCLKGVEGVYSDEPSTPGARLLRRLTYRQLEDILVKVSSQRAGSYTLWDMVALSVARRSGLRIVFFDCSDPANIWGALKGEKGSIVEG.

Position 7–11 (7–11 (KISGS)) interacts with ATP. Glycine 44 serves as a coordination point for UMP. ATP is bound by residues glycine 45 and arginine 49. UMP-binding positions include aspartate 66 and 114–120 (FQPGQST). ATP-binding residues include tyrosine 147 and glutamate 150.

It belongs to the UMP kinase family. In terms of assembly, homohexamer.

Its subcellular location is the cytoplasm. It carries out the reaction UMP + ATP = UDP + ADP. Its pathway is pyrimidine metabolism; CTP biosynthesis via de novo pathway; UDP from UMP (UMPK route): step 1/1. Its activity is regulated as follows. Inhibited by UTP. Catalyzes the reversible phosphorylation of UMP to UDP. This is Uridylate kinase from Aeropyrum pernix (strain ATCC 700893 / DSM 11879 / JCM 9820 / NBRC 100138 / K1).